The sequence spans 186 residues: Peptidoglycan-recognition protein SD (186 aa).

A signal peptide spans 1 to 18; that stretch reads MTWIGLLIVGLTAIAVQG. An N-acetylmuramoyl-L-alanine amidase domain is found at 47–169; that stretch reads AVIAHTAGGA…RQVSATMSPG (123 aa). Cys-57 and Cys-63 are disulfide-bonded. N-linked (GlcNAc...) asparagine glycosylation is present at Asn-181.

It belongs to the N-acetylmuramoyl-L-alanine amidase 2 family.

It is found in the secreted. Its function is as follows. Peptidoglycan-recognition protein that plays a key role in innate immunity by binding to peptidoglycans (PGN) of Gram-positive bacteria and activating the Toll pathway. Has no activity against on Gram-negative bacteria and fungi. Shows some partial redundancy with PRPGP-SA in Gram-positive bacteria recognition. May act by activating the proteolytic cleavage of Spatzle and the subsequent activation of Toll pathway. Recognizes S.aureus PGN. In Drosophila simulans (Fruit fly), this protein is Peptidoglycan-recognition protein SD (PGRP-SD).